The following is a 208-amino-acid chain: Putative 3-methyladenine DNA glycosylase (208 aa).

A disordered region spans residues 1 to 20 (MGRAHTVSRGEDHPPIARSE).

This sequence belongs to the DNA glycosylase MPG family.

In Mesorhizobium japonicum (strain LMG 29417 / CECT 9101 / MAFF 303099) (Mesorhizobium loti (strain MAFF 303099)), this protein is Putative 3-methyladenine DNA glycosylase.